We begin with the raw amino-acid sequence, 129 residues long: Small ribosomal subunit protein uS11 (129 aa).

This sequence belongs to the universal ribosomal protein uS11 family. As to quaternary structure, part of the 30S ribosomal subunit. Interacts with proteins S7 and S18. Binds to IF-3.

Its function is as follows. Located on the platform of the 30S subunit, it bridges several disparate RNA helices of the 16S rRNA. Forms part of the Shine-Dalgarno cleft in the 70S ribosome. The protein is Small ribosomal subunit protein uS11 of Staphylococcus saprophyticus subsp. saprophyticus (strain ATCC 15305 / DSM 20229 / NCIMB 8711 / NCTC 7292 / S-41).